The primary structure comprises 197 residues: Small ribosomal subunit protein uS4B (197 aa).

An S4 RNA-binding domain is found at 88–150 (SRLDNMVYRM…SRKTEMFVNN (63 aa)).

This sequence belongs to the universal ribosomal protein uS4 family. As to quaternary structure, part of the 30S ribosomal subunit. Contacts protein S5. The interaction surface between S4 and S5 is involved in control of translational fidelity.

Its function is as follows. One of the primary rRNA binding proteins, it binds directly to 16S rRNA where it nucleates assembly of the body of the 30S subunit. Functionally, with S5 and S12 plays an important role in translational accuracy. The protein is Small ribosomal subunit protein uS4B of Clostridium perfringens (strain ATCC 13124 / DSM 756 / JCM 1290 / NCIMB 6125 / NCTC 8237 / Type A).